Reading from the N-terminus, the 317-residue chain is Transaldolase (317 aa).

The active-site Schiff-base intermediate with substrate is Lys126.

Belongs to the transaldolase family. Type 1 subfamily. Homodimer.

Its subcellular location is the cytoplasm. The enzyme catalyses D-sedoheptulose 7-phosphate + D-glyceraldehyde 3-phosphate = D-erythrose 4-phosphate + beta-D-fructose 6-phosphate. It functions in the pathway carbohydrate degradation; pentose phosphate pathway; D-glyceraldehyde 3-phosphate and beta-D-fructose 6-phosphate from D-ribose 5-phosphate and D-xylulose 5-phosphate (non-oxidative stage): step 2/3. Functionally, transaldolase is important for the balance of metabolites in the pentose-phosphate pathway. The chain is Transaldolase from Burkholderia lata (strain ATCC 17760 / DSM 23089 / LMG 22485 / NCIMB 9086 / R18194 / 383).